A 984-amino-acid polypeptide reads, in one-letter code: Probable beta-galactosidase C (984 aa).

Positions 1–19 are cleaved as a signal peptide; that stretch reads MRLLNIFTTLCLLLWSGAA. Residues Tyr78, Asn123, Ala124, Glu125, and Asn183 each contribute to the substrate site. The active-site Proton donor is the Glu184. Tyr247 is a substrate binding site. Cysteines 253 and 300 form a disulfide. Asn272 carries an N-linked (GlcNAc...) asparagine glycan. Glu283 acts as the Nucleophile in catalysis. Tyr349 contacts substrate. N-linked (GlcNAc...) asparagine glycans are attached at residues Asn387, Asn433, Asn462, Asn516, Asn583, Asn599, Asn673, Asn716, Asn756, Asn860, and Asn870.

It belongs to the glycosyl hydrolase 35 family.

The protein resides in the secreted. The enzyme catalyses Hydrolysis of terminal non-reducing beta-D-galactose residues in beta-D-galactosides.. Cleaves beta-linked terminal galactosyl residues from gangliosides, glycoproteins, and glycosaminoglycans. In Sclerotinia sclerotiorum (strain ATCC 18683 / 1980 / Ss-1) (White mold), this protein is Probable beta-galactosidase C (lacC).